The chain runs to 423 residues: Serine--tRNA ligase (423 aa).

An L-serine-binding site is contributed by 231-233 (TAE). 262-264 (RSE) is an ATP binding site. Residue glutamate 285 participates in L-serine binding. Residue 349–352 (EISS) participates in ATP binding. Serine 384 is a binding site for L-serine.

This sequence belongs to the class-II aminoacyl-tRNA synthetase family. Type-1 seryl-tRNA synthetase subfamily. In terms of assembly, homodimer. The tRNA molecule binds across the dimer.

It is found in the cytoplasm. It catalyses the reaction tRNA(Ser) + L-serine + ATP = L-seryl-tRNA(Ser) + AMP + diphosphate + H(+). The catalysed reaction is tRNA(Sec) + L-serine + ATP = L-seryl-tRNA(Sec) + AMP + diphosphate + H(+). The protein operates within aminoacyl-tRNA biosynthesis; selenocysteinyl-tRNA(Sec) biosynthesis; L-seryl-tRNA(Sec) from L-serine and tRNA(Sec): step 1/1. Its function is as follows. Catalyzes the attachment of serine to tRNA(Ser). Is also able to aminoacylate tRNA(Sec) with serine, to form the misacylated tRNA L-seryl-tRNA(Sec), which will be further converted into selenocysteinyl-tRNA(Sec). This Acinetobacter baumannii (strain AB307-0294) protein is Serine--tRNA ligase.